Here is a 201-residue protein sequence, read N- to C-terminus: UPF0056 membrane protein PYRAB13050 (201 aa).

6 helical membrane passes run 8-28, 49-69, 73-93, 111-131, 140-160, and 181-201; these read FAVLYVGLFAITNPVGAVPIF, ITVLVTLLTFALVGKWIFKFF, VDAFAIAGGILLFRMGMEMLS, VAVIPLAIPLISGPGAITTVM, PIVIATIIAIGISVYIILASG, and LILTSMAIQMIINGIKGAFGI.

It belongs to the UPF0056 (MarC) family.

Its subcellular location is the cell membrane. This chain is UPF0056 membrane protein PYRAB13050, found in Pyrococcus abyssi (strain GE5 / Orsay).